The following is a 196-amino-acid chain: Pyridoxal 5'-phosphate synthase subunit PdxT (196 aa).

47–49 (GES) serves as a coordination point for L-glutamine. The active-site Nucleophile is the Cys79. L-glutamine is bound by residues Arg106 and 134–135 (IR). Catalysis depends on charge relay system residues His170 and Glu172.

The protein belongs to the glutaminase PdxT/SNO family. In the presence of PdxS, forms a dodecamer of heterodimers. Only shows activity in the heterodimer.

It carries out the reaction aldehydo-D-ribose 5-phosphate + D-glyceraldehyde 3-phosphate + L-glutamine = pyridoxal 5'-phosphate + L-glutamate + phosphate + 3 H2O + H(+). It catalyses the reaction L-glutamine + H2O = L-glutamate + NH4(+). Its pathway is cofactor biosynthesis; pyridoxal 5'-phosphate biosynthesis. In terms of biological role, catalyzes the hydrolysis of glutamine to glutamate and ammonia as part of the biosynthesis of pyridoxal 5'-phosphate. The resulting ammonia molecule is channeled to the active site of PdxS. In Bacillus mycoides (strain KBAB4) (Bacillus weihenstephanensis), this protein is Pyridoxal 5'-phosphate synthase subunit PdxT.